Here is a 706-residue protein sequence, read N- to C-terminus: Polyribonucleotide nucleotidyltransferase (706 aa).

Mg(2+) contacts are provided by Asp487 and Asp493. The 60-residue stretch at Pro553–Ile612 folds into the KH domain. The S1 motif domain maps to Gly622 to Lys692.

It belongs to the polyribonucleotide nucleotidyltransferase family. It depends on Mg(2+) as a cofactor.

Its subcellular location is the cytoplasm. The catalysed reaction is RNA(n+1) + phosphate = RNA(n) + a ribonucleoside 5'-diphosphate. Involved in mRNA degradation. Catalyzes the phosphorolysis of single-stranded polyribonucleotides processively in the 3'- to 5'-direction. The sequence is that of Polyribonucleotide nucleotidyltransferase from Neisseria gonorrhoeae (strain ATCC 700825 / FA 1090).